Reading from the N-terminus, the 358-residue chain is Sulfate/thiosulfate import ATP-binding protein CysA (358 aa).

One can recognise an ABC transporter domain in the interval 3-237 (IKIENLEKHF…PQTPFVTQFV (235 aa)). 35-42 (GPSGCGKT) contributes to the ATP binding site.

Belongs to the ABC transporter superfamily. Sulfate/tungstate importer (TC 3.A.1.6) family. The complex is composed of two ATP-binding proteins (CysA), two transmembrane proteins (CysT and CysW) and a solute-binding protein (CysP).

It localises to the cell inner membrane. It catalyses the reaction sulfate(out) + ATP + H2O = sulfate(in) + ADP + phosphate + H(+). It carries out the reaction thiosulfate(out) + ATP + H2O = thiosulfate(in) + ADP + phosphate + H(+). Functionally, part of the ABC transporter complex CysAWTP involved in sulfate/thiosulfate import. Responsible for energy coupling to the transport system. The polypeptide is Sulfate/thiosulfate import ATP-binding protein CysA (Mannheimia succiniciproducens (strain KCTC 0769BP / MBEL55E)).